The sequence spans 365 residues: Anthranilate phosphoribosyltransferase (365 aa).

Residues Gly96, 99–100 (GD), Thr104, 106–109 (NIST), 124–132 (KHGNRSVSS), and Ser136 contribute to the 5-phospho-alpha-D-ribose 1-diphosphate site. Gly96 is an anthranilate binding site. Mg(2+) is bound at residue Ser108. Asn127 lines the anthranilate pocket. Residue Arg182 participates in anthranilate binding. Asp240 and Glu241 together coordinate Mg(2+).

It belongs to the anthranilate phosphoribosyltransferase family. As to quaternary structure, homodimer. Requires Mg(2+) as cofactor.

It catalyses the reaction N-(5-phospho-beta-D-ribosyl)anthranilate + diphosphate = 5-phospho-alpha-D-ribose 1-diphosphate + anthranilate. It participates in amino-acid biosynthesis; L-tryptophan biosynthesis; L-tryptophan from chorismate: step 2/5. In terms of biological role, catalyzes the transfer of the phosphoribosyl group of 5-phosphorylribose-1-pyrophosphate (PRPP) to anthranilate to yield N-(5'-phosphoribosyl)-anthranilate (PRA). The polypeptide is Anthranilate phosphoribosyltransferase (Colwellia psychrerythraea (strain 34H / ATCC BAA-681) (Vibrio psychroerythus)).